Here is a 191-residue protein sequence, read N- to C-terminus: Peptidyl-tRNA hydrolase (191 aa).

Residue Tyr14 coordinates tRNA. His19 functions as the Proton acceptor in the catalytic mechanism. TRNA contacts are provided by Phe64, Asn66, and Asn113.

It belongs to the PTH family. In terms of assembly, monomer.

Its subcellular location is the cytoplasm. The enzyme catalyses an N-acyl-L-alpha-aminoacyl-tRNA + H2O = an N-acyl-L-amino acid + a tRNA + H(+). Functionally, hydrolyzes ribosome-free peptidyl-tRNAs (with 1 or more amino acids incorporated), which drop off the ribosome during protein synthesis, or as a result of ribosome stalling. Catalyzes the release of premature peptidyl moieties from peptidyl-tRNA molecules trapped in stalled 50S ribosomal subunits, and thus maintains levels of free tRNAs and 50S ribosomes. This is Peptidyl-tRNA hydrolase from Fusobacterium nucleatum subsp. nucleatum (strain ATCC 25586 / DSM 15643 / BCRC 10681 / CIP 101130 / JCM 8532 / KCTC 2640 / LMG 13131 / VPI 4355).